The sequence spans 312 residues: uncharacterized protein (312 aa).

Residue 112–118 (LIGLPMV) participates in ATP binding.

The protein belongs to the MurCDEF family.

This is an uncharacterized protein from Methanothermobacter thermautotrophicus (strain ATCC 29096 / DSM 1053 / JCM 10044 / NBRC 100330 / Delta H) (Methanobacterium thermoautotrophicum).